The chain runs to 543 residues: Serine/threonine-protein kinase PkaA (543 aa).

One can recognise a Protein kinase domain in the interval 8–276; sequence YLLEEPLGRG…ENLARGLRVV (269 aa). ATP contacts are provided by residues 14-22 and Lys48; that span reads LGRGATGTV. Asp142 functions as the Proton acceptor in the catalytic mechanism. Residues 303–480 form a disordered region; the sequence is PAPAQVPGAP…RQRSANPMRI (178 aa). Residues 352–361 show a composition bias toward pro residues; that stretch reads VMPPVPPGQP. 2 stretches are compositionally biased toward low complexity: residues 407–420 and 428–451; these read RQVS…RQAP and PGYG…QPQR. The segment covering 452–461 has biased composition (pro residues); that stretch reads YAPPPAPEPQ.

This sequence belongs to the protein kinase superfamily. Ser/Thr protein kinase family. Autophosphorylated mainly at Thr and slightly at Ser.

The enzyme catalyses L-seryl-[protein] + ATP = O-phospho-L-seryl-[protein] + ADP + H(+). It catalyses the reaction L-threonyl-[protein] + ATP = O-phospho-L-threonyl-[protein] + ADP + H(+). The chain is Serine/threonine-protein kinase PkaA (pkaA) from Streptomyces coelicolor (strain ATCC BAA-471 / A3(2) / M145).